Consider the following 196-residue polypeptide: Peptide deformylase (196 aa).

2 residues coordinate Fe cation: C105 and H147. E148 is an active-site residue. Position 151 (H151) interacts with Fe cation.

It belongs to the polypeptide deformylase family. It depends on Fe(2+) as a cofactor.

The enzyme catalyses N-terminal N-formyl-L-methionyl-[peptide] + H2O = N-terminal L-methionyl-[peptide] + formate. Removes the formyl group from the N-terminal Met of newly synthesized proteins. Requires at least a dipeptide for an efficient rate of reaction. N-terminal L-methionine is a prerequisite for activity but the enzyme has broad specificity at other positions. The chain is Peptide deformylase from Christiangramia forsetii (strain DSM 17595 / CGMCC 1.15422 / KT0803) (Gramella forsetii).